A 199-amino-acid polypeptide reads, in one-letter code: 5'-deoxynucleotidase YfbR (199 aa).

Residues 18–19 (RW) and histidine 33 each bind substrate. Positions 30 to 142 (VSEHSLQVAM…VKQADALCAY (113 aa)) constitute an HD domain. The a divalent metal cation site is built by histidine 33, histidine 68, and aspartate 69. Substrate contacts are provided by residues aspartate 69, 77-80 (DLPT), and aspartate 137. Aspartate 137 is a binding site for a divalent metal cation.

The protein belongs to the 5DNU family. As to quaternary structure, homodimer. It depends on a divalent metal cation as a cofactor.

The protein resides in the cytoplasm. The catalysed reaction is a 2'-deoxyribonucleoside 5'-phosphate + H2O = a 2'-deoxyribonucleoside + phosphate. Its function is as follows. Catalyzes the strictly specific dephosphorylation of 2'-deoxyribonucleoside 5'-monophosphates. This Salmonella arizonae (strain ATCC BAA-731 / CDC346-86 / RSK2980) protein is 5'-deoxynucleotidase YfbR.